A 258-amino-acid chain; its full sequence is Phycoerythrobilin:ferredoxin oxidoreductase (258 aa).

It belongs to the HY2 family.

It carries out the reaction (3Z)-phycoerythrobilin + oxidized 2[4Fe-4S]-[ferredoxin] = 15,16-dihydrobiliverdin + reduced 2[4Fe-4S]-[ferredoxin] + 2 H(+). Its function is as follows. Catalyzes the two-electron reduction of the C2 and C3(1) diene system of 15,16-dihydrobiliverdin. This Prochlorococcus marinus (strain NATL1A) protein is Phycoerythrobilin:ferredoxin oxidoreductase.